A 90-amino-acid polypeptide reads, in one-letter code: DNA-directed RNA polymerase subunit omega (90 aa).

Belongs to the RNA polymerase subunit omega family. In terms of assembly, the RNAP catalytic core consists of 2 alpha, 1 beta, 1 beta' and 1 omega subunit. When a sigma factor is associated with the core the holoenzyme is formed, which can initiate transcription.

The enzyme catalyses RNA(n) + a ribonucleoside 5'-triphosphate = RNA(n+1) + diphosphate. Promotes RNA polymerase assembly. Latches the N- and C-terminal regions of the beta' subunit thereby facilitating its interaction with the beta and alpha subunits. This chain is DNA-directed RNA polymerase subunit omega, found in Beutenbergia cavernae (strain ATCC BAA-8 / DSM 12333 / CCUG 43141 / JCM 11478 / NBRC 16432 / NCIMB 13614 / HKI 0122).